We begin with the raw amino-acid sequence, 300 residues long: Uricase (300 aa).

Residue Ala-2 is modified to N-acetylalanine. N6-acetyllysine; alternate is present on residues Lys-6 and Lys-19. Residues Lys-6 and Lys-19 each carry the N6-succinyllysine; alternate modification. Catalysis depends on Lys-19, which acts as the Charge relay system. N6-acetyllysine is present on residues Lys-23 and Lys-32. 2 positions are modified to phosphoserine: Ser-35 and Ser-59. The active-site Charge relay system is Thr-64. Urate-binding residues include Thr-64 and Asp-65. 3 positions are modified to N6-acetyllysine: Lys-114, Lys-118, and Lys-160. A urate-binding site is contributed by Phe-166. N6-acetyllysine is present on residues Lys-171 and Lys-181. A urate-binding site is contributed by Arg-183. N6-acetyllysine; alternate is present on residues Lys-217 and Lys-224. Lys-217 and Lys-224 each carry N6-succinyllysine; alternate. At Ser-228 the chain carries Phosphoserine. Residues Val-231, Gln-232, and Asn-258 each coordinate urate. Catalysis depends on His-260, which acts as the Charge relay system. Lys-274 is modified (N6-acetyllysine). A Phosphotyrosine modification is found at Tyr-285. The Microbody targeting signal signature appears at 298 to 300 (SRL).

Belongs to the uricase family.

Its subcellular location is the peroxisome. It carries out the reaction urate + O2 + H2O = 5-hydroxyisourate + H2O2. It participates in purine metabolism; urate degradation; (S)-allantoin from urate: step 1/3. Functionally, catalyzes the oxidation of uric acid to 5-hydroxyisourate, which is further processed to form (S)-allantoin. The polypeptide is Uricase (UOX) (Oryctolagus cuniculus (Rabbit)).